The sequence spans 378 residues: DNA replication and repair protein RecF (378 aa).

30–37 contacts ATP; sequence GRNGQGKT.

Belongs to the RecF family.

Its subcellular location is the cytoplasm. Its function is as follows. The RecF protein is involved in DNA metabolism; it is required for DNA replication and normal SOS inducibility. RecF binds preferentially to single-stranded, linear DNA. It also seems to bind ATP. The sequence is that of DNA replication and repair protein RecF from Frankia alni (strain DSM 45986 / CECT 9034 / ACN14a).